Here is a 437-residue protein sequence, read N- to C-terminus: Trigger factor (437 aa).

A PPIase FKBP-type domain is found at glycine 161 to proline 246.

It belongs to the FKBP-type PPIase family. Tig subfamily.

The protein resides in the cytoplasm. It catalyses the reaction [protein]-peptidylproline (omega=180) = [protein]-peptidylproline (omega=0). Functionally, involved in protein export. Acts as a chaperone by maintaining the newly synthesized protein in an open conformation. Functions as a peptidyl-prolyl cis-trans isomerase. The polypeptide is Trigger factor (Cellvibrio japonicus (strain Ueda107) (Pseudomonas fluorescens subsp. cellulosa)).